A 398-amino-acid chain; its full sequence is GTPase Obg (398 aa).

The Obg domain occupies 1 to 159; it reads MKFVDEAPIS…RNLKLELKVL (159 aa). The interval 128-148 is disordered; sequence TRFKSSTNRVPRKTTPGTEGE. The region spanning 160-333 is the OBG-type G domain; that stretch reads ADVGMLGLPN…LSGKIMDHLE (174 aa). Residues 166–173, 191–195, 213–216, 283–286, and 314–316 contribute to the GTP site; these read GLPNAGKS, FTTLV, DIPG, NKID, and SAL. Residues Ser-173 and Thr-193 each coordinate Mg(2+).

This sequence belongs to the TRAFAC class OBG-HflX-like GTPase superfamily. OBG GTPase family. Monomer. It depends on Mg(2+) as a cofactor.

It localises to the cytoplasm. An essential GTPase which binds GTP, GDP and possibly (p)ppGpp with moderate affinity, with high nucleotide exchange rates and a fairly low GTP hydrolysis rate. Plays a role in control of the cell cycle, stress response, ribosome biogenesis and in those bacteria that undergo differentiation, in morphogenesis control. The sequence is that of GTPase Obg from Cellvibrio japonicus (strain Ueda107) (Pseudomonas fluorescens subsp. cellulosa).